The following is a 220-amino-acid chain: uncharacterized protein (220 aa).

A coiled-coil region spans residues 165–202; that stretch reads DKYEDLISDYNKIMEKYREVIKSEIEKYKALSKRKNDI.

This is an uncharacterized protein from Pasteurella multocida (strain Pm70).